The chain runs to 758 residues: Putative transcriptional regulatory protein YJL206C (758 aa).

The segment at residues 47 to 73 (CIACRKRKVRCSGNIPCRLCQTNSYEC) is a DNA-binding region (zn(2)-C6 fungal-type).

This sequence belongs to the ASG1 family.

The protein resides in the nucleus. In Saccharomyces cerevisiae (strain ATCC 204508 / S288c) (Baker's yeast), this protein is Putative transcriptional regulatory protein YJL206C.